We begin with the raw amino-acid sequence, 153 residues long: Small ribosomal subunit protein uS9 (153 aa).

The disordered stretch occupies residues 122–153; that stretch reads KKAGFLTRDPRSTERKKYGLKKARKAPQYSKR. Residues 129 to 138 are compositionally biased toward basic and acidic residues; the sequence is RDPRSTERKK. Positions 139–153 are enriched in basic residues; it reads YGLKKARKAPQYSKR.

Belongs to the universal ribosomal protein uS9 family.

The sequence is that of Small ribosomal subunit protein uS9 (rpsI) from Mycobacterium leprae (strain TN).